Reading from the N-terminus, the 117-residue chain is V-type proton ATPase subunit G (117 aa).

It belongs to the V-ATPase G subunit family. As to quaternary structure, V-ATPase is a heteromultimeric enzyme made up of two complexes: the ATP-hydrolytic V1 complex and the proton translocation V0 complex. The V1 complex consists of three catalytic AB heterodimers that form a heterohexamer, three peripheral stalks each consisting of EG heterodimers, one central rotor including subunits D and F, and the regulatory subunits C and H. The proton translocation complex V0 consists of the proton transport subunit a, a ring of proteolipid subunits c9c'', rotary subunit d, subunits e and f, and the accessory subunits VhaAC45 and ATP6AP2.

Subunit of the V1 complex of vacuolar(H+)-ATPase (V-ATPase), a multisubunit enzyme composed of a peripheral complex (V1) that hydrolyzes ATP and a membrane integral complex (V0) that translocates protons. V-ATPase is responsible for acidifying and maintaining the pH of intracellular compartments and in some cell types, is targeted to the plasma membrane, where it is responsible for acidifying the extracellular environment. In enterocytes, acts as part of a pHCl-2 sensory pathway which mediates Tor-dependent larval growth and metabolism in response to zinc availability. Likely acts in maintaining enterocyte lysosomal acidification which consequently promotes Tor activation at the lysosome membrane. This is V-type proton ATPase subunit G (Vha13) from Drosophila melanogaster (Fruit fly).